We begin with the raw amino-acid sequence, 105 residues long: ATP synthase subunit c (105 aa).

3 consecutive transmembrane segments (helical) span residues 3 to 23 (FLAL…GGMG), 32 to 52 (SILG…IGMG), and 78 to 98 (VAMA…IIAI).

This sequence belongs to the ATPase C chain family. In terms of assembly, F-type ATPases have 2 components, F(1) - the catalytic core - and F(0) - the membrane proton channel. F(1) has five subunits: alpha(3), beta(3), gamma(1), delta(1), epsilon(1). F(0) has three main subunits: a(1), b(2) and c(10-14). The alpha and beta chains form an alternating ring which encloses part of the gamma chain. F(1) is attached to F(0) by a central stalk formed by the gamma and epsilon chains, while a peripheral stalk is formed by the delta and b chains.

It localises to the cell inner membrane. In terms of biological role, f(1)F(0) ATP synthase produces ATP from ADP in the presence of a proton or sodium gradient. F-type ATPases consist of two structural domains, F(1) containing the extramembraneous catalytic core and F(0) containing the membrane proton channel, linked together by a central stalk and a peripheral stalk. During catalysis, ATP synthesis in the catalytic domain of F(1) is coupled via a rotary mechanism of the central stalk subunits to proton translocation. Functionally, key component of the F(0) channel; it plays a direct role in translocation across the membrane. A homomeric c-ring of between 10-14 subunits forms the central stalk rotor element with the F(1) delta and epsilon subunits. The polypeptide is ATP synthase subunit c (Helicobacter pylori (strain P12)).